The chain runs to 67 residues: Putative ATP synthase subunit epsilon, mitochondrial (67 aa).

This sequence belongs to the eukaryotic ATPase epsilon family. As to quaternary structure, F-type ATPases have 2 components, CF(1) - the catalytic core - and CF(0) - the membrane proton channel. CF(1) has five subunits: alpha(3), beta(3), gamma(1), delta(1), epsilon(1). CF(0) seems to have nine subunits: a, b, c, d, e, f, g, F6 and 8 (or A6L).

The protein localises to the mitochondrion. Its subcellular location is the mitochondrion inner membrane. Mitochondrial membrane ATP synthase (F(1)F(0) ATP synthase or Complex V) produces ATP from ADP in the presence of a proton gradient across the membrane which is generated by electron transport complexes of the respiratory chain. F-type ATPases consist of two structural domains, F(1) - containing the extramembraneous catalytic core, and F(0) - containing the membrane proton channel, linked together by a central stalk and a peripheral stalk. During catalysis, ATP synthesis in the catalytic domain of F(1) is coupled via a rotary mechanism of the central stalk subunits to proton translocation. Part of the complex F(1) domain and of the central stalk which is part of the complex rotary element. Rotation of the central stalk against the surrounding alpha(3)beta(3) subunits leads to hydrolysis of ATP in three separate catalytic sites on the beta subunits. The protein is Putative ATP synthase subunit epsilon, mitochondrial (atp15) of Schizosaccharomyces pombe (strain 972 / ATCC 24843) (Fission yeast).